The following is a 461-amino-acid chain: Glycine--tRNA ligase (461 aa).

Arginine 100 and glutamate 163 together coordinate substrate. ATP contacts are provided by residues 195-197 (RNE), 205-210 (FRTREF), 282-283 (EL), and 326-329 (GLGR). 210–214 (FEQME) is a binding site for substrate. 322–326 (EPAAG) contributes to the substrate binding site.

It belongs to the class-II aminoacyl-tRNA synthetase family. In terms of assembly, homodimer.

It localises to the cytoplasm. It carries out the reaction tRNA(Gly) + glycine + ATP = glycyl-tRNA(Gly) + AMP + diphosphate. Its function is as follows. Catalyzes the attachment of glycine to tRNA(Gly). The polypeptide is Glycine--tRNA ligase (Corynebacterium efficiens (strain DSM 44549 / YS-314 / AJ 12310 / JCM 11189 / NBRC 100395)).